Consider the following 343-residue polypeptide: Labda-7,13(16),14-triene synthase (343 aa).

Residues Asp-114 and Glu-119 each contribute to the Mg(2+) site. A DDXXXE motif motif is present at residues 114 to 119 (DDVHVE). Arg-206 provides a ligand contact to substrate. Asn-252, Ser-256, and Glu-260 together coordinate Mg(2+). Residues 252–260 (NDLYSFAYE) carry the NXXXSXXXE motif motif.

This sequence belongs to the terpene synthase family. Mg(2+) is required as a cofactor.

It catalyses the reaction (13E)-labda-7,13-dien-15-yl diphosphate = labda-7,13(16),14-triene + diphosphate. Its function is as follows. Involved in the biosynthesis of the labdane-type bicyclic diterpene labda-7,13(16),14-triene. Catalyzes the conversion of labda-7,13(E)-dienyl diphosphate to yield labda-7,13(16),14-triene. The chain is Labda-7,13(16),14-triene synthase from Streptomyces clavuligerus.